Consider the following 202-residue polypeptide: B-cell CLL/lymphoma 7 protein family member B (202 aa).

A disordered region spans residues 53–202; that stretch reads DSKEKEKSKS…PAVPQTASES (150 aa). Over residues 90-99 the composition is skewed to polar residues; sequence ENSNQSSVSD. The segment covering 107-123 has biased composition (low complexity); that stretch reads SSTNSSPSPQQSESLSP. Phosphoserine is present on residues serine 114, serine 118, serine 120, serine 122, serine 127, serine 148, and serine 152.

Belongs to the BCL7 family.

Positive regulator of apoptosis. Plays a role in the Wnt signaling pathway, negatively regulating the expression of Wnt signaling components CTNNB1 and HMGA1. Involved in cell cycle progression, maintenance of the nuclear structure and stem cell differentiation. May play a role in lung tumor development or progression. This is B-cell CLL/lymphoma 7 protein family member B (BCL7B) from Bos taurus (Bovine).